The chain runs to 367 residues: MNTTANPSNIIVGLSGGVDSSVTAALLKQQGYQVRGVFMQNWEDDDNDEYCSIKQDSFDAIAVADIIGIDIDIVNFAAQYKDKVFAYFLQEYSAGRTPNPDVLCNAEIKFKCFLDYAVGQGADTIATGHYARKEVRNGVHYLLKGLDRNKDQSYFLYRLKPFQLERAIFPLGGLEKPEVRRLAAEFKLPTAAKKDSTGICFIGERPFREFLQKYLPTDNGKMVTPEGKTVGEHVGLMFYTLGQRKGLGIGGAGEPWFVAAKDLTKNELIVVQGHDHPLLYTRSLVMNDLSFTLPERPKAGRYTCKTRYRMADAPCELRYLDDETAELVFDEPQWAVTPGQSAVLYDGDICLGGGIIQTTDKPVIITR.

ATP-binding positions include 13–20 (GLSGGVDS) and M39. The interaction with target base in tRNA stretch occupies residues 99 to 101 (NPD). C104 (nucleophile) is an active-site residue. An intrachain disulfide couples C104 to C200. Residue G128 participates in ATP binding. Positions 150–152 (KDQ) are interaction with tRNA. The Cysteine persulfide intermediate role is filled by C200. Residues 307-308 (RY) form an interaction with tRNA region.

Belongs to the MnmA/TRMU family.

It localises to the cytoplasm. It catalyses the reaction S-sulfanyl-L-cysteinyl-[protein] + uridine(34) in tRNA + AH2 + ATP = 2-thiouridine(34) in tRNA + L-cysteinyl-[protein] + A + AMP + diphosphate + H(+). Catalyzes the 2-thiolation of uridine at the wobble position (U34) of tRNA, leading to the formation of s(2)U34. The sequence is that of tRNA-specific 2-thiouridylase MnmA from Neisseria meningitidis serogroup B (strain ATCC BAA-335 / MC58).